A 129-amino-acid polypeptide reads, in one-letter code: Small ribosomal subunit protein uS8my (129 aa).

Belongs to the universal ribosomal protein uS8 family. Component of the mitochondrial ribosome small subunit.

It is found in the mitochondrion. The sequence is that of Small ribosomal subunit protein uS8my (RPS15AE) from Arabidopsis thaliana (Mouse-ear cress).